A 533-amino-acid polypeptide reads, in one-letter code: Undecaprenyl phosphate-alpha-4-amino-4-deoxy-L-arabinose arabinosyl transferase (533 aa).

A run of 13 helical transmembrane segments spans residues 10 to 30 (LLLA…GLWI), 64 to 84 (PAGY…LFGV), 86 to 106 (IASA…AGKI), 113 to 133 (SFAS…AGYS), 137 to 157 (PQFT…VHSI), 170 to 190 (VACG…PAII), 207 to 227 (FGPL…LAVH), 257 to 277 (WWFY…LLPV), 290 to 310 (DTAF…LSKG), 312 to 332 (LPTY…DALV), 345 to 365 (VNGI…IYVQ), 377 to 397 (HLLL…LQGI), and 402 to 422 (FWAL…AALP).

This sequence belongs to the glycosyltransferase 83 family.

It localises to the cell inner membrane. The enzyme catalyses 4-amino-4-deoxy-alpha-L-arabinopyranosyl di-trans,octa-cis-undecaprenyl phosphate + lipid IVA = lipid IIA + di-trans,octa-cis-undecaprenyl phosphate.. Its pathway is lipopolysaccharide metabolism; 4-amino-4-deoxy-beta-L-arabinose-lipid A biosynthesis. Functionally, catalyzes the transfer of the L-Ara4N moiety of the glycolipid undecaprenyl phosphate-alpha-L-Ara4N to lipid A. The modified arabinose is attached to lipid A and is required for resistance to polymyxin and cationic antimicrobial peptides. The protein is Undecaprenyl phosphate-alpha-4-amino-4-deoxy-L-arabinose arabinosyl transferase of Pseudomonas savastanoi pv. phaseolicola (strain 1448A / Race 6) (Pseudomonas syringae pv. phaseolicola (strain 1448A / Race 6)).